A 459-amino-acid polypeptide reads, in one-letter code: Ribulose bisphosphate carboxylase large chain (459 aa).

Lysine 4 carries the N6,N6,N6-trimethyllysine modification. Positions 113 and 163 each coordinate substrate. Lysine 165 serves as the catalytic Proton acceptor. A substrate-binding site is contributed by lysine 167. Mg(2+) contacts are provided by lysine 191, aspartate 193, and glutamate 194. Lysine 191 is subject to N6-carboxylysine. Histidine 284 serves as the catalytic Proton acceptor. Substrate contacts are provided by arginine 285, histidine 317, and serine 369.

The protein belongs to the RuBisCO large chain family. Type I subfamily. In terms of assembly, heterohexadecamer of 8 large chains and 8 small chains; disulfide-linked. The disulfide link is formed within the large subunit homodimers. Mg(2+) is required as a cofactor. Post-translationally, the disulfide bond which can form in the large chain dimeric partners within the hexadecamer appears to be associated with oxidative stress and protein turnover.

It localises to the plastid. The protein resides in the chloroplast. It catalyses the reaction 2 (2R)-3-phosphoglycerate + 2 H(+) = D-ribulose 1,5-bisphosphate + CO2 + H2O. The enzyme catalyses D-ribulose 1,5-bisphosphate + O2 = 2-phosphoglycolate + (2R)-3-phosphoglycerate + 2 H(+). Functionally, ruBisCO catalyzes two reactions: the carboxylation of D-ribulose 1,5-bisphosphate, the primary event in carbon dioxide fixation, as well as the oxidative fragmentation of the pentose substrate in the photorespiration process. Both reactions occur simultaneously and in competition at the same active site. The protein is Ribulose bisphosphate carboxylase large chain of Nyssa ogeche (Ogeechee tupelo).